A 1806-amino-acid polypeptide reads, in one-letter code: SH3 and multiple ankyrin repeat domains protein 3 (1806 aa).

The tract at residues 76-150 (MDGPGASAVV…KFLDEERLLQ (75 aa)) is intramolecular interaction with the ANK repeats. Tyrosine 197 is subject to Phosphotyrosine. ANK repeat units follow at residues 223-253 (SGEC…HLDF), 257-286 (DGLT…SPDY), 290-320 (RGLT…QLGI), 324-353 (NGWQ…DMGA), 357-386 (SGNT…NRDV), and 390-420 (NSQT…DVVP). Residues 407 to 416 (AEVIKTHKDS) are compositionally biased toward basic and acidic residues. Residues 407–467 (AEVIKTHKDS…AQPAASPGPS (61 aa)) form a disordered region. Positions 439-461 (LASPRPLQRSASDINLKGEAQPA) are enriched in pro residues. A phosphoserine mark is found at serine 448, serine 450, serine 463, serine 470, and serine 558. The region spanning 546–605 (VPGRKFIAVKAHSPQGEGEIPLHRGEAVKVLSIGEGGFWEGTVKGRTGWFPADCVEEVQM) is the SH3 domain. Position 631 is a phosphotyrosine (tyrosine 631). One can recognise a PDZ domain in the interval 646 to 740 (VAVLQKRDHE…RLVMKVVSVT (95 aa)). Disordered stretches follow at residues 665–689 (KAET…ESVD) and 760–853 (PSTT…KGIP). Residues 753–760 (PPPPKRAP) form a required for interaction with ABI1 region. Serine 770 carries the phosphoserine modification. The span at 813-845 (ATVKQRPTSRRITPAEISSLFERQGLPGPEKLP) shows a compositional bias: pro residues. Phosphoserine occurs at positions 857, 866, and 877. A disordered region spans residues 871 to 1021 (RFPRSTSMQD…FSASLFAPSK (151 aa)). Pro residues predominate over residues 906–915 (DSGPPPAFSP). Phosphoserine is present on residues serine 966 and serine 973. Threonine 988 carries the phosphothreonine modification. Over residues 993 to 1013 (PKRRPRPPGPDSPYANLGAFS) the composition is skewed to gly residues. Tyrosine 1006 is modified (phosphotyrosine). Residue arginine 1041 is modified to Asymmetric dimethylarginine. A compositionally biased stretch (low complexity) spans 1115–1124 (PGADLPSLQP). Disordered stretches follow at residues 1115 to 1460 (PGAD…MSTL), 1475 to 1525 (ADGH…HHAA), and 1546 to 1584 (SKLW…KDTR). The span at 1173 to 1193 (TGKPLDPSSPLALALAARERA) shows a compositional bias: basic and acidic residues. Phosphothreonine is present on threonine 1204. Phosphoserine occurs at positions 1208, 1233, 1237, and 1240. A compositionally biased stretch (pro residues) spans 1251–1261 (EAEKVPREERK). Threonine 1309 carries the phosphothreonine modification. Serine 1328 is modified (phosphoserine). The span at 1360-1370 (LPPAQLSSSDE) shows a compositional bias: basic and acidic residues. 2 stretches are compositionally biased toward low complexity: residues 1371-1392 (ETRE…ANGV) and 1444-1460 (HLET…MSTL). The SH3-binding motif lies at 1485 to 1491 (PPVPPKP). Serine 1495 carries the phosphoserine modification. Residues 1495–1505 (SPLGKGPVTFR) are compositionally biased toward polar residues. Residues 1569-1589 (ISELSSRLQQLNKDTRSLGEE) are a coiled coil. 4 positions are modified to phosphoserine: serine 1585, serine 1596, serine 1604, and serine 1614. The span at 1627–1637 (PGGPGGGASYS) shows a compositional bias: low complexity. Residues 1627–1664 (PGGPGGGASYSVRPSGRYPVARRAPSPVKPASLERVEG) are disordered. Over residues 1638-1657 (VRPSGRYPVARRAPSPVKPA) the composition is skewed to pro residues. Residues serine 1709, serine 1711, and serine 1713 each carry the phosphoserine modification. The 64-residue stretch at 1743–1806 (WSKFDVGDWL…ERALRQLDGS (64 aa)) folds into the SAM domain.

May homomultimerize via its SAM domain. Interacts with BAIAP2, DBNL and SLC17A7/VGLUT1. Interacts with DLGAP1/GKAP, GRM1/MGLUR1, GRM5/MGLUR5 and LZTS3 C-termini via its PDZ domain. Interacts with ABI1, HOMER1, HOMER2, HOMER3 and CTTN/cortactin SH3 domain. Is part of a complex with DLG4/PSD-95 and DLGAP1/GKAP. Interacts (via PDZ domain) with the GRIA1 subunit of the AMPA receptor (via PDZ-binding motif). Interacts with WASF1 and CYFIP2; the interactions mediate the association of SHANK3 with the WAVE1 complex. Interacts with ARPC2; the interaction probably mediates the association of SHANK3 with the Arp2/3 complex. Interacts (via ANK repeats) with SHARPIN and SPTAN1. Interacts (via PDZ domain) with ARHGAP44 (probably via PDZ-binding motif); the interaction takes place in dendritic spines and promotes GRIA1 exocytosis. Interacts with CAMK2A. Interacts with DIP2A. Interacts with ADGRL3. As to expression, expressed in the cerebral cortex and the cerebellum.

The protein resides in the cytoplasm. Its subcellular location is the postsynaptic density. It localises to the cell projection. The protein localises to the dendritic spine. Major scaffold postsynaptic density protein which interacts with multiple proteins and complexes to orchestrate the dendritic spine and synapse formation, maturation and maintenance. Interconnects receptors of the postsynaptic membrane including NMDA-type and metabotropic glutamate receptors via complexes with GKAP/PSD-95 and HOMER, respectively, and the actin-based cytoskeleton. Plays a role in the structural and functional organization of the dendritic spine and synaptic junction through the interaction with Arp2/3 and WAVE1 complex as well as the promotion of the F-actin clusters. By way of this control of actin dynamics, participates in the regulation of developing neurons growth cone motility and the NMDA receptor-signaling. Also modulates GRIA1 exocytosis and GRM5/MGLUR5 expression and signaling to control the AMPA and metabotropic glutamate receptor-mediated synaptic transmission and plasticity. May be required at an early stage of synapse formation and be inhibited by IGF1 to promote synapse maturation. This chain is SH3 and multiple ankyrin repeat domains protein 3 (SHANK3), found in Homo sapiens (Human).